Reading from the N-terminus, the 137-residue chain is ATP synthase epsilon chain (137 aa).

The protein belongs to the ATPase epsilon chain family. In terms of assembly, F-type ATPases have 2 components, CF(1) - the catalytic core - and CF(0) - the membrane proton channel. CF(1) has five subunits: alpha(3), beta(3), gamma(1), delta(1), epsilon(1). CF(0) has three main subunits: a, b and c.

The protein localises to the cell membrane. Produces ATP from ADP in the presence of a proton gradient across the membrane. This is ATP synthase epsilon chain from Desulforudis audaxviator (strain MP104C).